Reading from the N-terminus, the 392-residue chain is Stilbene synthase 4 (392 aa).

Substrate is bound at residue 55–58 (KFNR). Cys-164 is a catalytic residue. Substrate contacts are provided by residues Leu-267 and 305–307 (GGP).

This sequence belongs to the thiolase-like superfamily. Chalcone/stilbene synthases family. Homodimer.

It is found in the cytoplasm. The enzyme catalyses 4-coumaroyl-CoA + 3 malonyl-CoA + 3 H(+) = trans-resveratrol + 4 CO2 + 4 CoA. The protein operates within phytoalexin biosynthesis; 3,4',5-trihydroxystilbene biosynthesis; 3,4',5-trihydroxystilbene from trans-4-coumarate: step 2/2. Functionally, mediates resistance to pathogens which are sensitive to stilbenes. The sequence is that of Stilbene synthase 4 from Vitis vinifera (Grape).